The primary structure comprises 193 residues: Ubiquitin-conjugating enzyme E2 E1 (193 aa).

The disordered stretch occupies residues 1 to 45 (MSDDDSRASTSSSSSSSSNQQTEKETNTPKKKESKVSMSKNSKLL). Position 2 is an N-acetylserine (Ser-2). Residues 8 to 18 (ASTSSSSSSSS) show a composition bias toward low complexity. Over residues 22-35 (TEKETNTPKKKESK) the composition is skewed to basic and acidic residues. The segment covering 36–45 (VSMSKNSKLL) has biased composition (polar residues). Positions 47-193 (TSAKRIQKEL…ARQWTKRYAT (147 aa)) constitute a UBC core domain. The Glycyl thioester intermediate role is filled by Cys-131. Residue Lys-136 forms a Glycyl lysine isopeptide (Lys-Gly) (interchain with G-Cter in ISG15) linkage.

The protein belongs to the ubiquitin-conjugating enzyme family. In terms of assembly, interacts with RNF14. ISGylation suppresses ubiquitin E2 enzyme activity. In terms of processing, autoubiquitinated in vitro.

Its subcellular location is the nucleus. The catalysed reaction is S-ubiquitinyl-[E1 ubiquitin-activating enzyme]-L-cysteine + [E2 ubiquitin-conjugating enzyme]-L-cysteine = [E1 ubiquitin-activating enzyme]-L-cysteine + S-ubiquitinyl-[E2 ubiquitin-conjugating enzyme]-L-cysteine.. It catalyses the reaction S-ubiquitinyl-[E1 ubiquitin-activating enzyme]-L-cysteine + [acceptor protein]-L-lysine = [E1 ubiquitin-activating enzyme]-L-cysteine + N(6)-monoubiquitinyl-[acceptor protein]-L-lysine.. Its pathway is protein modification; protein ubiquitination. Accepts ubiquitin from the E1 complex and catalyzes its covalent attachment to other proteins. Catalyzes the covalent attachment of ISG15 to other proteins. Mediates the selective degradation of short-lived and abnormal proteins. In vitro also catalyzes 'Lys-48'-linked polyubiquitination. Catalyzes monoubiquitination of other proteins in both an E3-dependent and E3-independent manner. This is Ubiquitin-conjugating enzyme E2 E1 from Homo sapiens (Human).